We begin with the raw amino-acid sequence, 84 residues long: Large ribosomal subunit protein bL27 (84 aa).

The tract at residues 1–22 is disordered; that stretch reads MAHKKAGGSTRNGRDSESKRLG.

Belongs to the bacterial ribosomal protein bL27 family.

This is Large ribosomal subunit protein bL27 from Shewanella amazonensis (strain ATCC BAA-1098 / SB2B).